The primary structure comprises 116 residues: Biogenesis of lysosome-related organelles complex 1 subunit CNL1 (116 aa).

A coiled-coil region spans residues 63-95 (DIVDVNIQSFKDILSKCEELENYFTMLDQIEMI).

This sequence belongs to the BLOC1S4 family. As to quaternary structure, component of the biogenesis of lysosome-related organelles complex-1 (BLOC-1).

The protein resides in the cytoplasm. In terms of biological role, component of the biogenesis of lysosome-related organelles complex-1 (BLOC-1), a complex that is involved in endosomal cargo sorting. The protein is Biogenesis of lysosome-related organelles complex 1 subunit CNL1 (CLN1) of Vanderwaltozyma polyspora (strain ATCC 22028 / DSM 70294 / BCRC 21397 / CBS 2163 / NBRC 10782 / NRRL Y-8283 / UCD 57-17) (Kluyveromyces polysporus).